A 398-amino-acid chain; its full sequence is Acetate kinase (398 aa).

Mg(2+) is bound at residue asparagine 7. Lysine 14 serves as a coordination point for ATP. Arginine 92 is a binding site for substrate. Catalysis depends on aspartate 149, which acts as the Proton donor/acceptor. Residues 208-212, 283-285, and 331-335 contribute to the ATP site; these read HLGNG, DCR, and GIGEN. Glutamate 385 is a Mg(2+) binding site.

Belongs to the acetokinase family. Homodimer. Mg(2+) serves as cofactor. Requires Mn(2+) as cofactor.

Its subcellular location is the cytoplasm. It catalyses the reaction acetate + ATP = acetyl phosphate + ADP. Its pathway is metabolic intermediate biosynthesis; acetyl-CoA biosynthesis; acetyl-CoA from acetate: step 1/2. Its function is as follows. Catalyzes the formation of acetyl phosphate from acetate and ATP. Can also catalyze the reverse reaction. The protein is Acetate kinase of Fusobacterium nucleatum subsp. nucleatum (strain ATCC 25586 / DSM 15643 / BCRC 10681 / CIP 101130 / JCM 8532 / KCTC 2640 / LMG 13131 / VPI 4355).